The primary structure comprises 229 residues: MAVERKFVQERLKKLMVKEWIKDEVRSAGFGGVDILRTPLGTQVTLFVERPGLVIGKGGRRIKALTEKLKDFGIENPQVSVDEVEKPEFNAQLMASLLARALERGWYFRRAGYRFLYRIMEAGAKGCEIEISGKLVSERARTEKFVAGTIVHTGDPAESMVQKGFDIAIKKLGVLGVSVRIIPPDVTLPDEFEVKDVNIEHLRGESGEDEGDKGDEQGGEAQEAEGAGA.

The region spanning 17 to 85 (VKEWIKDEVR…NPQVSVDEVE (69 aa)) is the KH type-2 domain. Positions 202 to 229 (LRGESGEDEGDKGDEQGGEAQEAEGAGA) are disordered. A compositionally biased stretch (low complexity) spans 219 to 229 (GEAQEAEGAGA).

This sequence belongs to the universal ribosomal protein uS3 family. Part of the 30S ribosomal subunit.

In terms of biological role, binds the lower part of the 30S subunit head. This Archaeoglobus fulgidus (strain ATCC 49558 / DSM 4304 / JCM 9628 / NBRC 100126 / VC-16) protein is Small ribosomal subunit protein uS3.